The primary structure comprises 280 residues: Ribosomal RNA small subunit methyltransferase A (280 aa).

S-adenosyl-L-methionine contacts are provided by His15, Leu17, Gly42, Glu64, Asp89, and Asn109.

It belongs to the class I-like SAM-binding methyltransferase superfamily. rRNA adenine N(6)-methyltransferase family. RsmA subfamily.

It localises to the cytoplasm. It catalyses the reaction adenosine(1518)/adenosine(1519) in 16S rRNA + 4 S-adenosyl-L-methionine = N(6)-dimethyladenosine(1518)/N(6)-dimethyladenosine(1519) in 16S rRNA + 4 S-adenosyl-L-homocysteine + 4 H(+). Specifically dimethylates two adjacent adenosines (A1518 and A1519) in the loop of a conserved hairpin near the 3'-end of 16S rRNA in the 30S particle. May play a critical role in biogenesis of 30S subunits. The sequence is that of Ribosomal RNA small subunit methyltransferase A from Prochlorococcus marinus (strain MIT 9303).